A 290-amino-acid chain; its full sequence is Ribosomal RNA small subunit methyltransferase A (290 aa).

Asparagine 27, leucine 29, glycine 54, glutamate 75, aspartate 100, and asparagine 125 together coordinate S-adenosyl-L-methionine.

Belongs to the class I-like SAM-binding methyltransferase superfamily. rRNA adenine N(6)-methyltransferase family. RsmA subfamily.

The protein resides in the cytoplasm. The catalysed reaction is adenosine(1518)/adenosine(1519) in 16S rRNA + 4 S-adenosyl-L-methionine = N(6)-dimethyladenosine(1518)/N(6)-dimethyladenosine(1519) in 16S rRNA + 4 S-adenosyl-L-homocysteine + 4 H(+). In terms of biological role, specifically dimethylates two adjacent adenosines (A1518 and A1519) in the loop of a conserved hairpin near the 3'-end of 16S rRNA in the 30S particle. May play a critical role in biogenesis of 30S subunits. The chain is Ribosomal RNA small subunit methyltransferase A from Streptococcus thermophilus (strain ATCC BAA-491 / LMD-9).